We begin with the raw amino-acid sequence, 613 residues long: Chaperone protein DnaK (613 aa).

Positions 579 to 613 are disordered; the sequence is MYQSASSTTQTGSGNQNSSKQENDKTVDAEYKEKS. The segment covering 581–597 has biased composition (low complexity); that stretch reads QSASSTTQTGSGNQNSS. The segment covering 599-613 has biased composition (basic and acidic residues); it reads QENDKTVDAEYKEKS.

The protein belongs to the heat shock protein 70 family.

Acts as a chaperone. The polypeptide is Chaperone protein DnaK (Thermoplasma volcanium (strain ATCC 51530 / DSM 4299 / JCM 9571 / NBRC 15438 / GSS1)).